Consider the following 438-residue polypeptide: Serine--tRNA ligase (438 aa).

An L-serine-binding site is contributed by Thr-245–Glu-247. Arg-276–Glu-278 serves as a coordination point for ATP. Residue Glu-299 participates in L-serine binding. Glu-363–Ser-366 provides a ligand contact to ATP. L-serine is bound at residue Ser-398.

Belongs to the class-II aminoacyl-tRNA synthetase family. Type-1 seryl-tRNA synthetase subfamily. As to quaternary structure, homodimer. The tRNA molecule binds across the dimer.

The protein resides in the cytoplasm. The catalysed reaction is tRNA(Ser) + L-serine + ATP = L-seryl-tRNA(Ser) + AMP + diphosphate + H(+). The enzyme catalyses tRNA(Sec) + L-serine + ATP = L-seryl-tRNA(Sec) + AMP + diphosphate + H(+). The protein operates within aminoacyl-tRNA biosynthesis; selenocysteinyl-tRNA(Sec) biosynthesis; L-seryl-tRNA(Sec) from L-serine and tRNA(Sec): step 1/1. Catalyzes the attachment of serine to tRNA(Ser). Is also able to aminoacylate tRNA(Sec) with serine, to form the misacylated tRNA L-seryl-tRNA(Sec), which will be further converted into selenocysteinyl-tRNA(Sec). In Verminephrobacter eiseniae (strain EF01-2), this protein is Serine--tRNA ligase.